A 397-amino-acid chain; its full sequence is Methylthioribose kinase (397 aa).

Residues N44, K61, and 115–117 contribute to the ATP site; that span reads EDL. D233 is a substrate binding site. 250 to 252 is an ATP binding site; sequence DPE. R340 provides a ligand contact to substrate.

It belongs to the methylthioribose kinase family. Homodimer.

It catalyses the reaction 5-(methylsulfanyl)-D-ribose + ATP = 5-(methylsulfanyl)-alpha-D-ribose 1-phosphate + ADP + H(+). It participates in amino-acid biosynthesis; L-methionine biosynthesis via salvage pathway; S-methyl-5-thio-alpha-D-ribose 1-phosphate from S-methyl-5'-thioadenosine (hydrolase route): step 2/2. Catalyzes the phosphorylation of methylthioribose into methylthioribose-1-phosphate. This Bacillus subtilis (strain 168) protein is Methylthioribose kinase (mtnK).